Here is a 1849-residue protein sequence, read N- to C-terminus: Brefeldin A-inhibited guanine nucleotide-exchange protein 1 (1849 aa).

The interval 2 to 224 (YEGKKTKNMF…QEAKQMEKER (223 aa)) is DCB; DCB:DCB and DCB:HUS domain interaction. The span at 46–58 (AETEKQSPPHGEA) shows a compositional bias: basic and acidic residues. Disordered regions lie at residues 46–65 (AETEKQSPPHGEAKAGSSTL), 216–301 (EAKQ…ADQA), and 350–413 (INVS…SPGA). Ser-52, Ser-286, Ser-289, and Ser-290 each carry phosphoserine. Polar residues-rich tracts occupy residues 350-360 (INVSADGNNGT) and 394-409 (SVSSNDTQESGNSSGP). Ser-397 and Ser-410 each carry phosphoserine. Residues 557 to 577 (ADAQSVVDIYVNYDCDLNAAN) form an HUS; DCB:HUS domain interaction region. A disordered region spans residues 634–687 (PNSQTTLGQEKPSEQETSEMKHPETINRYGSLNSLESTSSSGIGSYSTQMSGTD). The segment covering 644 to 658 (KPSEQETSEMKHPET) has biased composition (basic and acidic residues). Low complexity predominate over residues 664 to 684 (SLNSLESTSSSGIGSYSTQMS). Positions 709–840 (FTKKPKRGIQ…IIMLTTDLHS (132 aa)) constitute an SEC7 domain. The Nuclear localization signal (NLS) signature appears at 711 to 715 (KKPKR). A phosphoserine mark is found at Ser-1079, Ser-1566, and Ser-1569.

Homodimer. Interacts with ARFGEF2/BIG2; both proteins are probably part of the same or very similar macromolecular complexes. Interacts with FKBP2. Interacts with MYO9B. Interacts with PRKAR1A and PRKAR2A. Interacts with PPP1CC. Interacts with NCL, FBL, NUP62 and U3 small nucleolar RNA. Interacts with DPY30. Interacts with PDE3A. Interacts with KANK1. Interacts with TBC1D22A and TBC1D22B. Phosphorylated. In vitro phosphorylated by PKA reducing its GEF activity and dephosphorylated by phosphatase PP1. Abundantly expressed in kidney, somewhat less abundant in lung, spleen, and brain, and still less abundant in heart.

It localises to the cytoplasm. Its subcellular location is the perinuclear region. The protein resides in the golgi apparatus. It is found in the trans-Golgi network. The protein localises to the nucleus. It localises to the nucleolus. Its subcellular location is the nucleus matrix. The protein resides in the membrane. Its activity is regulated as follows. Inhibited by brefeldin A. Promotes guanine-nucleotide exchange on ARF1 and ARF3. Promotes the activation of ARF1/ARF3 through replacement of GDP with GTP. Involved in vesicular trafficking. Required for the maintenance of Golgi structure; the function may be independent of its GEF activity. Required for the maturation of integrin beta-1 in the Golgi. Involved in the establishment and persistence of cell polarity during directed cell movement in wound healing. Proposed to act as A kinase-anchoring protein (AKAP) and may mediate crosstalk between Arf and PKA pathways. Inhibits GAP activity of MYO9B probably through competitive RhoA binding. The function in the nucleus remains to be determined. This is Brefeldin A-inhibited guanine nucleotide-exchange protein 1 (ARFGEF1) from Bos taurus (Bovine).